The chain runs to 353 residues: Holliday junction branch migration complex subunit RuvB (353 aa).

The tract at residues 1-183 (MSGEGLVSAA…FGFTAHMDFY (183 aa)) is large ATPase domain (RuvB-L). ATP contacts are provided by residues Leu-22, Arg-23, Gly-64, Lys-67, Thr-68, Ser-69, 130–132 (EDF), Arg-173, Tyr-183, and Arg-220. Thr-68 is a Mg(2+) binding site. Positions 184 to 254 (DAAELALVLT…VARAALRIYD (71 aa)) are small ATPAse domain (RuvB-S). The segment at 257-353 (ALGLDRLDRA…ALFGEDLPAS (97 aa)) is head domain (RuvB-H). Residues Arg-312 and Arg-317 each contribute to the DNA site.

It belongs to the RuvB family. Homohexamer. Forms an RuvA(8)-RuvB(12)-Holliday junction (HJ) complex. HJ DNA is sandwiched between 2 RuvA tetramers; dsDNA enters through RuvA and exits via RuvB. An RuvB hexamer assembles on each DNA strand where it exits the tetramer. Each RuvB hexamer is contacted by two RuvA subunits (via domain III) on 2 adjacent RuvB subunits; this complex drives branch migration. In the full resolvosome a probable DNA-RuvA(4)-RuvB(12)-RuvC(2) complex forms which resolves the HJ.

The protein localises to the cytoplasm. The catalysed reaction is ATP + H2O = ADP + phosphate + H(+). Functionally, the RuvA-RuvB-RuvC complex processes Holliday junction (HJ) DNA during genetic recombination and DNA repair, while the RuvA-RuvB complex plays an important role in the rescue of blocked DNA replication forks via replication fork reversal (RFR). RuvA specifically binds to HJ cruciform DNA, conferring on it an open structure. The RuvB hexamer acts as an ATP-dependent pump, pulling dsDNA into and through the RuvAB complex. RuvB forms 2 homohexamers on either side of HJ DNA bound by 1 or 2 RuvA tetramers; 4 subunits per hexamer contact DNA at a time. Coordinated motions by a converter formed by DNA-disengaged RuvB subunits stimulates ATP hydrolysis and nucleotide exchange. Immobilization of the converter enables RuvB to convert the ATP-contained energy into a lever motion, pulling 2 nucleotides of DNA out of the RuvA tetramer per ATP hydrolyzed, thus driving DNA branch migration. The RuvB motors rotate together with the DNA substrate, which together with the progressing nucleotide cycle form the mechanistic basis for DNA recombination by continuous HJ branch migration. Branch migration allows RuvC to scan DNA until it finds its consensus sequence, where it cleaves and resolves cruciform DNA. The sequence is that of Holliday junction branch migration complex subunit RuvB from Parafrankia sp. (strain EAN1pec).